The sequence spans 399 residues: S-adenosylmethionine synthase (399 aa).

Residue histidine 17 coordinates ATP. Aspartate 19 is a binding site for Mg(2+). Glutamate 52 lines the K(+) pocket. Glutamate 65 and glutamine 109 together coordinate L-methionine. A flexible loop region spans residues 109-119 (QSADIAQGVDA). Residues 177–179 (DSK), 243–244 (KF), aspartate 252, 258–259 (RK), alanine 275, and lysine 279 contribute to the ATP site. Aspartate 252 serves as a coordination point for L-methionine. Lysine 283 is an L-methionine binding site.

This sequence belongs to the AdoMet synthase family. As to quaternary structure, homotetramer; dimer of dimers. Mg(2+) serves as cofactor. It depends on K(+) as a cofactor.

The protein localises to the cytoplasm. The enzyme catalyses L-methionine + ATP + H2O = S-adenosyl-L-methionine + phosphate + diphosphate. The protein operates within amino-acid biosynthesis; S-adenosyl-L-methionine biosynthesis; S-adenosyl-L-methionine from L-methionine: step 1/1. Functionally, catalyzes the formation of S-adenosylmethionine (AdoMet) from methionine and ATP. The overall synthetic reaction is composed of two sequential steps, AdoMet formation and the subsequent tripolyphosphate hydrolysis which occurs prior to release of AdoMet from the enzyme. The polypeptide is S-adenosylmethionine synthase (Bradyrhizobium sp. (strain BTAi1 / ATCC BAA-1182)).